Here is a 173-residue protein sequence, read N- to C-terminus: Adenine phosphoribosyltransferase (173 aa).

Belongs to the purine/pyrimidine phosphoribosyltransferase family. Homodimer.

Its subcellular location is the cytoplasm. It carries out the reaction AMP + diphosphate = 5-phospho-alpha-D-ribose 1-diphosphate + adenine. Its pathway is purine metabolism; AMP biosynthesis via salvage pathway; AMP from adenine: step 1/1. Its function is as follows. Catalyzes a salvage reaction resulting in the formation of AMP, that is energically less costly than de novo synthesis. This Thermotoga maritima (strain ATCC 43589 / DSM 3109 / JCM 10099 / NBRC 100826 / MSB8) protein is Adenine phosphoribosyltransferase.